Consider the following 102-residue polypeptide: Defensin-like protein 285 (102 aa).

The signal sequence occupies residues 1 to 28 (MTNLYFKTAFLLSLLLLSFSYQSKLIEA). Cystine bridges form between Cys39–Cys100, Cys64–Cys83, Cys70–Cys88, and Cys75–Cys90.

It belongs to the DEFL family.

The protein localises to the secreted. This chain is Defensin-like protein 285, found in Arabidopsis thaliana (Mouse-ear cress).